A 424-amino-acid polypeptide reads, in one-letter code: Homeobox-containing protein 1 (424 aa).

The HNF-p1 domain occupies Met1–Glu30. Residues Ser103–Asp199 enclose the POU-specific atypical domain. A DNA-binding region (homeobox) is located at residues Gln215–Ser291. Residues Ser291–Ser345 form a disordered region. Residues Glu293 to Ala310 show a composition bias toward low complexity. 2 stretches are compositionally biased toward polar residues: residues Asn311–Ser321 and Ser329–Ser345.

This sequence belongs to the HMBOX1 homeobox family. Expressed in both AWC neurons. Also expressed in the FLP mechanosensory neurons.

Its subcellular location is the nucleus. Transcriptional repressor which maintains cell fate asymmetry of AWC neurons in adults by repressing the expression of multiple AWC (OFF) genes, including srsx-3 in the AWC (ON) neuron. The protein is Homeobox-containing protein 1 of Caenorhabditis elegans.